The sequence spans 413 residues: ATP-dependent (S)-NAD(P)H-hydrate dehydratase (413 aa).

The YjeF C-terminal domain maps to 98–402; sequence NLNHFLSYVP…KSVPNALVWG (305 aa). (6S)-NADPHX is bound by residues Gly-199 and 252 to 258; that span reads NFVEYRA. ATP contacts are provided by residues 292–296 and 311–320; these read KGQED and GMPRRCGGQG. Asp-321 is a (6S)-NADPHX binding site.

The protein belongs to the NnrD/CARKD family. Mg(2+) is required as a cofactor.

The enzyme catalyses (6S)-NADHX + ATP = ADP + phosphate + NADH + H(+). The catalysed reaction is (6S)-NADPHX + ATP = ADP + phosphate + NADPH + H(+). Catalyzes the dehydration of the S-form of NAD(P)HX at the expense of ATP, which is converted to ADP. Together with NAD(P)HX epimerase, which catalyzes the epimerization of the S- and R-forms, the enzyme allows the repair of both epimers of NAD(P)HX, a damaged form of NAD(P)H that is a result of enzymatic or heat-dependent hydration. The polypeptide is ATP-dependent (S)-NAD(P)H-hydrate dehydratase (Heterostelium pallidum (strain ATCC 26659 / Pp 5 / PN500) (Cellular slime mold)).